The following is a 158-amino-acid chain: NAD(P)H-quinone oxidoreductase subunit J, chloroplastic (158 aa).

This sequence belongs to the complex I 30 kDa subunit family. As to quaternary structure, NDH is composed of at least 16 different subunits, 5 of which are encoded in the nucleus.

The protein localises to the plastid. It is found in the chloroplast thylakoid membrane. It catalyses the reaction a plastoquinone + NADH + (n+1) H(+)(in) = a plastoquinol + NAD(+) + n H(+)(out). The enzyme catalyses a plastoquinone + NADPH + (n+1) H(+)(in) = a plastoquinol + NADP(+) + n H(+)(out). Its function is as follows. NDH shuttles electrons from NAD(P)H:plastoquinone, via FMN and iron-sulfur (Fe-S) centers, to quinones in the photosynthetic chain and possibly in a chloroplast respiratory chain. The immediate electron acceptor for the enzyme in this species is believed to be plastoquinone. Couples the redox reaction to proton translocation, and thus conserves the redox energy in a proton gradient. The sequence is that of NAD(P)H-quinone oxidoreductase subunit J, chloroplastic from Lemna minor (Common duckweed).